The sequence spans 178 residues: MPAYHSILMESDTKLIGNMAMLPIRSQFKGPAPRETKDTDIIDEAIYYFKANVFFKNYEIKNEADRTLIYITLYISECLKKLQKCNSKGQGEKEMYTLGITNFPIPGEPGFPLNAMYVKPSNKQEDEVMRAYLQQLRQETGLRLCDKVFDPQTDKPSKWWICFVKKQFMNKSLSGPGQ.

It belongs to the ARPC3 family. As to quaternary structure, component of the Arp2/3 complex composed of actr2/arp2, actr3/arp3, arpc1 (arpc1a or arpc1b), arpc2, arpc3, arpc4 and arpc5.

It is found in the cytoplasm. The protein resides in the cytoskeleton. Its subcellular location is the cell projection. It localises to the nucleus. Functionally, component of the Arp2/3 complex, a multiprotein complex that mediates actin polymerization upon stimulation by nucleation-promoting factor (NPF). The Arp2/3 complex mediates the formation of branched actin networks in the cytoplasm, providing the force for cell motility. In addition to its role in the cytoplasmic cytoskeleton, the Arp2/3 complex also promotes actin polymerization in the nucleus, thereby regulating gene transcription and repair of damaged DNA. The Arp2/3 complex promotes homologous recombination (HR) repair in response to DNA damage by promoting nuclear actin polymerization, leading to drive motility of double-strand breaks (DSBs). The chain is Actin-related protein 2/3 complex subunit 3-B (arpc3-b) from Xenopus laevis (African clawed frog).